A 315-amino-acid chain; its full sequence is Homeobox-leucine zipper protein HAT3 (315 aa).

The interval 140–163 is disordered; the sequence is SCSLGGGSDDEDGSGNGDDSSRKK. Residues 159–218 constitute a DNA-binding region (homeobox); it reads SSRKKLRLSKEQALVLEETFKEHSTLNPKQKMALAKQLNLRTRQVEVWFQNRRARTKLKQ. The interval 226 to 247 is leucine-zipper; the sequence is LKRCCENLTDENRRLQKEVSEL. The span at 280-305 shows a compositional bias: low complexity; sequence SSSSVAPPVMNSSSPMGPMSPWAAMP. The interval 280-315 is disordered; that stretch reads SSSSVAPPVMNSSSPMGPMSPWAAMPLRQRPAAGSH.

The protein belongs to the HD-ZIP homeobox family. Class II subfamily.

It localises to the nucleus. Functionally, probable transcription factor. This chain is Homeobox-leucine zipper protein HAT3 (HAT3), found in Arabidopsis thaliana (Mouse-ear cress).